The chain runs to 185 residues: Elongation factor P (185 aa).

Belongs to the elongation factor P family.

It is found in the cytoplasm. The protein operates within protein biosynthesis; polypeptide chain elongation. Involved in peptide bond synthesis. Stimulates efficient translation and peptide-bond synthesis on native or reconstituted 70S ribosomes in vitro. Probably functions indirectly by altering the affinity of the ribosome for aminoacyl-tRNA, thus increasing their reactivity as acceptors for peptidyl transferase. The chain is Elongation factor P from Rippkaea orientalis (strain PCC 8801 / RF-1) (Cyanothece sp. (strain PCC 8801)).